Here is a 336-residue protein sequence, read N- to C-terminus: Cytoplasmic envelopment protein 2 (336 aa).

The tract at residues 67–69 is interaction with host BBLF1; the sequence is KKK.

It belongs to the herpesviridae cytoplasmic envelopment protein 2 family. In terms of assembly, homodimer. Interacts with BBLF1. Interacts with the capsid. Interacts with BKRF4 (via C-terminus); this interaction is important for infectious virion production. Interacts with host TYK2; this interaction participates to the inhibition of host type I IFN signaling. Interacts with host STAT1; this interaction leads to STAT1 dephosphorylation and inhibition. Interacts with host STAT2; this interaction leads to STAT2 degradation. Interacts with host CUL1; this interaction might facilitate CUL1 recruitment to STAT2, leading to ubiquitination and degradation of the latter. Interacts with host AGO2; this interaction participates to the host miRNA regulation leading to enhanced SUMOylation.

Its subcellular location is the virion tegument. The protein localises to the host cytoplasm. It is found in the host nucleus. It localises to the host Golgi apparatus. The protein resides in the host trans-Golgi network. Functionally, plays a critical role in cytoplasmic virus egress. Participates in the final step of tegumentation and envelope acquisition within the host cytoplasm by directly interacting with the capsid. Upon virion binding to target cell, a signaling cascade is triggered to disrupt the interaction with the capsid, thereby preparing capsid uncoating. Activates the AP-1 pathway and enhances EBV reactivation and virus release. Inhibits type I IFN-induced TYK2, STAT1 and STAT3 phosphorylation, thereby impairing type I IFN signaling and counteracting the ability of IFN-alpha to suppress the reactivation of EBV. Recruits SHP1 phosphatase to dephosphorylate STAT1. Mediates STAT2 ubiquitination and proteasomal degradation. Also suppresses type II and type III IFN signaling. Contributes to G1/S arrest in the host cell. Acts as an miRNA regulator that interferes with the function of RISC in miRNA-mediated mRNA silencing. As a result, SUMOylation is increased. When encapsulated in the exosomes released by EBV-infected host cells, may facilitate the infection in recipient cells. The protein is Cytoplasmic envelopment protein 2 of Epstein-Barr virus (strain AG876) (HHV-4).